Here is a 59-residue protein sequence, read N- to C-terminus: Large ribosomal subunit protein uL30 (59 aa).

The protein belongs to the universal ribosomal protein uL30 family. In terms of assembly, part of the 50S ribosomal subunit.

The sequence is that of Large ribosomal subunit protein uL30 from Histophilus somni (strain 129Pt) (Haemophilus somnus).